The following is a 409-amino-acid chain: NDP-glycosyltransferase ltbB (409 aa).

N-linked (GlcNAc...) asparagine glycosylation is present at asparagine 36. The chain crosses the membrane as a helical span at residues 319–339 (IWAFAYVWAWLQTLYTAPWIA).

Belongs to the GT2 glycosyltransferase family.

The protein resides in the membrane. Its pathway is secondary metabolite biosynthesis. In terms of biological role, NDP-glycosyltransferase; part of the gene cluster that mediates the biosynthesis of luteodienoside A, a glycosylated polyketide consisting of an unusual 1-O-beta-D-glucopyranosyl-myo-inositol (glucinol) ester of 3-hydroxy-2,2,4-trimethylocta-4,6-dienoic acid. LtbB likely serves as a glucinol synthase by transferring D-glucose to myo-inositol using NDP-glucose as a substrate. The ltbA carnitine O-acyltransferase (cAT) domain uses glucinol produced by the glycosyltransferase ltbB as an offloading substrate to release luteodienoside A from the HR-PKS. Since ltbA and ltbB are sufficient for the biosynthesis of luteodienoside A, the functions of the methyltransferase ltbC and the FAD-binding monooxygenase ltbD within the pathway remain obscur. In Aspergillus luteorubrus, this protein is NDP-glycosyltransferase ltbB.